The primary structure comprises 115 residues: Putative ethidium bromide resistance protein (115 aa).

4 helical membrane-spanning segments follow: residues 4 to 21, 30 to 47, 58 to 79, and 85 to 104; these read WLFL…TSAL, LAPS…FYFL, VAYA…WLLH, and AWGF…ARSP.

It belongs to the drug/metabolite transporter (DMT) superfamily. Small multidrug resistance (SMR) (TC 2.A.7.1) family.

It localises to the cell membrane. One of the determinants for resistance to ethidium bromide and quaternary ammonium compounds. The polypeptide is Putative ethidium bromide resistance protein (ebr) (Escherichia coli).